Here is a 224-residue protein sequence, read N- to C-terminus: ATP-dependent dethiobiotin synthetase BioD (224 aa).

Threonine 18 provides a ligand contact to Mg(2+). Lysine 39 is a catalytic residue. Serine 43 is a binding site for substrate. 2 residues coordinate Mg(2+): aspartate 56 and glutamate 117. ATP is bound by residues aspartate 56, 117–120 (EGVG), and 177–178 (NE).

The protein belongs to the dethiobiotin synthetase family. As to quaternary structure, homodimer. Mg(2+) is required as a cofactor.

Its subcellular location is the cytoplasm. It carries out the reaction (7R,8S)-7,8-diammoniononanoate + CO2 + ATP = (4R,5S)-dethiobiotin + ADP + phosphate + 3 H(+). The protein operates within cofactor biosynthesis; biotin biosynthesis; biotin from 7,8-diaminononanoate: step 1/2. Its function is as follows. Catalyzes a mechanistically unusual reaction, the ATP-dependent insertion of CO2 between the N7 and N8 nitrogen atoms of 7,8-diaminopelargonic acid (DAPA, also called 7,8-diammoniononanoate) to form a ureido ring. This chain is ATP-dependent dethiobiotin synthetase BioD, found in Xanthomonas oryzae pv. oryzae (strain MAFF 311018).